The primary structure comprises 623 residues: Dictomallein-5 (623 aa).

The signal sequence occupies residues Met-1–Ser-21. The Peptidase M66 domain occupies Pro-174–Tyr-435. Residue His-327 participates in Zn(2+) binding. Residue Glu-328 is part of the active site. Zn(2+) contacts are provided by His-331 and His-337.

It belongs to the dictomallein family. The cofactor is Zn(2+).

Its subcellular location is the secreted. The chain is Dictomallein-5 (dtmlE) from Dictyostelium discoideum (Social amoeba).